A 453-amino-acid polypeptide reads, in one-letter code: tRNA modification GTPase MnmE (453 aa).

The (6S)-5-formyl-5,6,7,8-tetrahydrofolate site is built by Arg22, Glu79, and Lys119. A TrmE-type G domain is found at 215-376 (GMKVVIAGRP…LKQHLKSLMG (162 aa)). Residue Asn225 participates in K(+) binding. GTP contacts are provided by residues 225–230 (NAGKSS), 244–250 (TEIAGTT), 269–272 (DTAG), and 334–337 (NKAD). Mg(2+) is bound at residue Ser229. Residues Thr244, Ile246, and Thr249 each contribute to the K(+) site. Thr250 provides a ligand contact to Mg(2+). Lys453 is a (6S)-5-formyl-5,6,7,8-tetrahydrofolate binding site.

It belongs to the TRAFAC class TrmE-Era-EngA-EngB-Septin-like GTPase superfamily. TrmE GTPase family. In terms of assembly, homodimer. Heterotetramer of two MnmE and two MnmG subunits. Requires K(+) as cofactor.

The protein resides in the cytoplasm. Functionally, exhibits a very high intrinsic GTPase hydrolysis rate. Involved in the addition of a carboxymethylaminomethyl (cmnm) group at the wobble position (U34) of certain tRNAs, forming tRNA-cmnm(5)s(2)U34. This Shewanella baltica (strain OS155 / ATCC BAA-1091) protein is tRNA modification GTPase MnmE.